Here is a 151-residue protein sequence, read N- to C-terminus: Deoxyuridine 5'-triphosphate nucleotidohydrolase (151 aa).

Residues 70-72 (RSG), Asn-83, 87-89 (LID), and Met-97 each bind substrate.

The protein belongs to the dUTPase family. Mg(2+) serves as cofactor.

It carries out the reaction dUTP + H2O = dUMP + diphosphate + H(+). The protein operates within pyrimidine metabolism; dUMP biosynthesis; dUMP from dCTP (dUTP route): step 2/2. Functionally, this enzyme is involved in nucleotide metabolism: it produces dUMP, the immediate precursor of thymidine nucleotides and it decreases the intracellular concentration of dUTP so that uracil cannot be incorporated into DNA. The sequence is that of Deoxyuridine 5'-triphosphate nucleotidohydrolase from Pseudomonas putida (strain ATCC 47054 / DSM 6125 / CFBP 8728 / NCIMB 11950 / KT2440).